The sequence spans 479 residues: Oxysterol-binding protein homolog C23B6.01c (479 aa).

Residues serine 328, serine 408, serine 409, and serine 421 each carry the phosphoserine modification. The segment covering 404-418 has biased composition (basic and acidic residues); sequence KPEDSSIHKHSRDAS. A disordered region spans residues 404 to 479; sequence KPEDSSIHKH…KLHEEQDPAL (76 aa). Residues 439-452 show a composition bias toward polar residues; sequence QSTASFVTYRSDNG. Positions 470 to 479 are enriched in basic and acidic residues; the sequence is KLHEEQDPAL.

It belongs to the OSBP family.

It localises to the cytoplasm. It is found in the nucleus. The chain is Oxysterol-binding protein homolog C23B6.01c from Schizosaccharomyces pombe (strain 972 / ATCC 24843) (Fission yeast).